The chain runs to 506 residues: Glutamate--tRNA ligase (506 aa).

Residues 24-34 (PSPTGLQHIGG) carry the 'HIGH' region motif. 4 residues coordinate Zn(2+): C121, C123, C148, and H150. Residues 266 to 270 (KLSKR) carry the 'KMSKS' region motif. K269 is an ATP binding site.

This sequence belongs to the class-I aminoacyl-tRNA synthetase family. Glutamate--tRNA ligase type 1 subfamily. As to quaternary structure, monomer. The cofactor is Zn(2+).

It is found in the cytoplasm. It carries out the reaction tRNA(Glu) + L-glutamate + ATP = L-glutamyl-tRNA(Glu) + AMP + diphosphate. In terms of biological role, catalyzes the attachment of glutamate to tRNA(Glu) in a two-step reaction: glutamate is first activated by ATP to form Glu-AMP and then transferred to the acceptor end of tRNA(Glu). This chain is Glutamate--tRNA ligase, found in Borrelia recurrentis (strain A1).